A 1436-amino-acid polypeptide reads, in one-letter code: DNA-directed RNA polymerase subunit beta' (1436 aa).

Zn(2+)-binding residues include C70, C72, C85, and C88. Mg(2+)-binding residues include D481, D483, and D485. Residues C829, C903, C910, and C913 each coordinate Zn(2+).

The protein belongs to the RNA polymerase beta' chain family. As to quaternary structure, the RNAP catalytic core consists of 2 alpha, 1 beta, 1 beta' and 1 omega subunit. When a sigma factor is associated with the core the holoenzyme is formed, which can initiate transcription. The cofactor is Mg(2+). Zn(2+) serves as cofactor.

It carries out the reaction RNA(n) + a ribonucleoside 5'-triphosphate = RNA(n+1) + diphosphate. Its function is as follows. DNA-dependent RNA polymerase catalyzes the transcription of DNA into RNA using the four ribonucleoside triphosphates as substrates. The protein is DNA-directed RNA polymerase subunit beta' of Flavobacterium johnsoniae (strain ATCC 17061 / DSM 2064 / JCM 8514 / BCRC 14874 / CCUG 350202 / NBRC 14942 / NCIMB 11054 / UW101) (Cytophaga johnsonae).